A 378-amino-acid polypeptide reads, in one-letter code: Succinyl-diaminopimelate desuccinylase (378 aa).

Residue histidine 68 participates in Zn(2+) binding. Residue aspartate 70 is part of the active site. A Zn(2+)-binding site is contributed by aspartate 101. The active-site Proton acceptor is the glutamate 135. Zn(2+) contacts are provided by glutamate 136, glutamate 164, and histidine 350.

It belongs to the peptidase M20A family. DapE subfamily. As to quaternary structure, homodimer. The cofactor is Zn(2+). Requires Co(2+) as cofactor.

It carries out the reaction N-succinyl-(2S,6S)-2,6-diaminopimelate + H2O = (2S,6S)-2,6-diaminopimelate + succinate. The protein operates within amino-acid biosynthesis; L-lysine biosynthesis via DAP pathway; LL-2,6-diaminopimelate from (S)-tetrahydrodipicolinate (succinylase route): step 3/3. Its function is as follows. Catalyzes the hydrolysis of N-succinyl-L,L-diaminopimelic acid (SDAP), forming succinate and LL-2,6-diaminopimelate (DAP), an intermediate involved in the bacterial biosynthesis of lysine and meso-diaminopimelic acid, an essential component of bacterial cell walls. The chain is Succinyl-diaminopimelate desuccinylase from Acinetobacter baumannii (strain ATCC 17978 / DSM 105126 / CIP 53.77 / LMG 1025 / NCDC KC755 / 5377).